Reading from the N-terminus, the 245-residue chain is 1-(5-phosphoribosyl)-5-[(5-phosphoribosylamino)methylideneamino] imidazole-4-carboxamide isomerase (245 aa).

Asp-8 acts as the Proton acceptor in catalysis. The active-site Proton donor is the Asp-129.

Belongs to the HisA/HisF family.

It is found in the cytoplasm. The catalysed reaction is 1-(5-phospho-beta-D-ribosyl)-5-[(5-phospho-beta-D-ribosylamino)methylideneamino]imidazole-4-carboxamide = 5-[(5-phospho-1-deoxy-D-ribulos-1-ylimino)methylamino]-1-(5-phospho-beta-D-ribosyl)imidazole-4-carboxamide. Its pathway is amino-acid biosynthesis; L-histidine biosynthesis; L-histidine from 5-phospho-alpha-D-ribose 1-diphosphate: step 4/9. This is 1-(5-phosphoribosyl)-5-[(5-phosphoribosylamino)methylideneamino] imidazole-4-carboxamide isomerase from Pelobacter propionicus (strain DSM 2379 / NBRC 103807 / OttBd1).